A 375-amino-acid chain; its full sequence is Alpha-1,2-galactosyltransferase (375 aa).

The Cytoplasmic segment spans residues 1–2; the sequence is MR. Residues 3-23 traverse the membrane as a helical; Signal-anchor for type II membrane protein segment; it reads FAPYLISAVVITTIILGGAWW. Residues 24 to 375 lie on the Lumenal side of the membrane; sequence TSAMDTKLQT…HIQNLLKPSS (352 aa).

Belongs to the glycosyltransferase 34 family. Post-translationally, O-glycosylated.

Its subcellular location is the golgi apparatus membrane. Involved in the O- and N-linked oligosaccharide modification of proteins transported through the Golgi stack. This occurs in cis Golgi where the enzyme transfers galactose from UDP-galactose to a variety of mannose based acceptors. The protein is Alpha-1,2-galactosyltransferase (gma12) of Schizosaccharomyces pombe (strain 972 / ATCC 24843) (Fission yeast).